The sequence spans 214 residues: MALGILGRKVGMTQIFSPEGLAIPVTVVQAGPCTVTQIKTQATDGYNAIQLGYLPTAEKHLTRAQRGHLTKAGVTELLRHLREFRVDQPEAYQLGQKITVEMFSPGQLVDVAGTSIGRGFAGYQKRHHFGRGPMSHGSKNHRRPGSIGAGTTPGRVFPGMRMAGRLGGGRVTTRKLQLVQVDPERDLLVIKGCVPGVEGGLLEITPAKQVGNKR.

The interval 129-157 is disordered; sequence FGRGPMSHGSKNHRRPGSIGAGTTPGRVF.

This sequence belongs to the universal ribosomal protein uL3 family. As to quaternary structure, part of the 50S ribosomal subunit. Forms a cluster with proteins L14 and L19.

Functionally, one of the primary rRNA binding proteins, it binds directly near the 3'-end of the 23S rRNA, where it nucleates assembly of the 50S subunit. This is Large ribosomal subunit protein uL3 from Synechococcus sp. (strain JA-2-3B'a(2-13)) (Cyanobacteria bacterium Yellowstone B-Prime).